Here is a 188-residue protein sequence, read N- to C-terminus: dCTP deaminase (188 aa).

Residues 111-116 (KSTYAR), 135-137 (TLE), glutamine 156, tyrosine 170, and glutamine 180 contribute to the dCTP site. Glutamate 137 acts as the Proton donor/acceptor in catalysis.

The protein belongs to the dCTP deaminase family. As to quaternary structure, homotrimer.

The catalysed reaction is dCTP + H2O + H(+) = dUTP + NH4(+). It participates in pyrimidine metabolism; dUMP biosynthesis; dUMP from dCTP (dUTP route): step 1/2. Its function is as follows. Catalyzes the deamination of dCTP to dUTP. The polypeptide is dCTP deaminase (Legionella pneumophila (strain Paris)).